Reading from the N-terminus, the 382-residue chain is S-adenosylmethionine synthase (382 aa).

ATP is bound at residue H16. D18 serves as a coordination point for Mg(2+). E44 lines the K(+) pocket. L-methionine-binding residues include E57 and Q100. The interval 100–110 is flexible loop; the sequence is QSPDIAQGVDN. ATP-binding positions include 165–167, 231–232, D240, 246–247, and K267; these read DAK, RF, and RK. L-methionine is bound at residue D240. Residue K271 participates in L-methionine binding.

Belongs to the AdoMet synthase family. In terms of assembly, homotetramer; dimer of dimers. Mg(2+) serves as cofactor. K(+) is required as a cofactor.

The protein resides in the cytoplasm. It catalyses the reaction L-methionine + ATP + H2O = S-adenosyl-L-methionine + phosphate + diphosphate. Its pathway is amino-acid biosynthesis; S-adenosyl-L-methionine biosynthesis; S-adenosyl-L-methionine from L-methionine: step 1/1. Catalyzes the formation of S-adenosylmethionine (AdoMet) from methionine and ATP. The overall synthetic reaction is composed of two sequential steps, AdoMet formation and the subsequent tripolyphosphate hydrolysis which occurs prior to release of AdoMet from the enzyme. This Legionella pneumophila subsp. pneumophila (strain Philadelphia 1 / ATCC 33152 / DSM 7513) protein is S-adenosylmethionine synthase.